The primary structure comprises 225 residues: Insulin-induced gene 2 protein (225 aa).

Residues 1–28 (MAEGETESPRPKKCGPYISSVTSQSVNV) are Cytoplasmic-facing. A helical membrane pass occupies residues 29–51 (VIRGVVLFFIGVFLALVLNLLQI). At 52–70 (QRNVTLFPPDVITSIFSSA) the chain is on the lumenal side. Residues 71-88 (WWVPPCCGTASAVIGLLY) form a helical membrane-spanning segment. Residues 89–103 (PCIDRHLGEPHKFKR) are Cytoplasmic-facing. The chain crosses the membrane as a helical span at residues 104 to 126 (EWSSVMRCVAVFVGINHASAKVD). The Lumenal segment spans residues 127 to 129 (FDN). A helical membrane pass occupies residues 130-148 (NFQFSLTLAALSVGLWWTF). At 149 to 153 (DRSRS) the chain is on the cytoplasmic side. Residue serine 151 is modified to Phosphoserine. A helical membrane pass occupies residues 154–175 (GFGLGVGIAFLATVVTQLLVYN). Over 176–189 (GVYQYTSPDFLYVR) the chain is Lumenal. The chain crosses the membrane as a helical span at residues 190–207 (SWLPCIFFAGGITMGNIG). Topologically, residues 208 to 225 (RQLAMYECKVIAEKSHQE) are cytoplasmic. Cysteine 215 bears the Cysteine sulfenic acid (-SOH); alternate mark. Residue cysteine 215 forms a Glycyl cysteine thioester (Cys-Gly) (interchain with G-Cter in ubiquitin); alternate linkage. The short motif at 219–225 (AEKSHQE) is the KxHxx element.

It belongs to the INSIG family. In terms of assembly, interacts with SCAP; interaction is direct and only takes place in the presence of sterols; it prevents interaction between SCAP and the coat protein complex II (COPII). Associates with the SCAP-SREBP complex (composed of SCAP and SREBF1/SREBP1 or SREBF2/SREBP2); association is mediated via its interaction with SCAP and only takes place in the presence of sterols. Interacts with RNF139. Interacts with RNF145. In terms of processing, phosphorylation at Ser-151 by PCK1 reduces binding to oxysterol, disrupting the interaction between INSIG2 and SCAP, thereby promoting nuclear translocation of SREBP proteins (SREBF1/SREBP1 or SREBF2/SREBP2) and subsequent transcription of downstream lipogenesis-related genes. Polyubiquitinated by AMFR/gp78 at Cys-215 in some tissues such as adipose tissues, undifferentiated myoblasts and liver, leading to its degradation. In differentiated myotubes, Cys-215 oxidation prevents ubiquitination at the same site, resulting in protein stabilization. Post-translationally, oxidized at Cys-215 in differentiated myotubes, preventing ubiquitination at the same site, and resulting in protein stabilization. As to expression, expressed in liver, testis, kidney, spleen, intestine, brain and adrenal gland.

The protein localises to the endoplasmic reticulum membrane. In terms of biological role, oxysterol-binding protein that mediates feedback control of cholesterol synthesis by controlling both endoplasmic reticulum to Golgi transport of SCAP and degradation of HMGCR. Acts as a negative regulator of cholesterol biosynthesis by mediating the retention of the SCAP-SREBP complex in the endoplasmic reticulum, thereby blocking the processing of sterol regulatory element-binding proteins (SREBPs) SREBF1/SREBP1 and SREBF2/SREBP2. Binds oxysterol, including 22-hydroxycholesterol, 24-hydroxycholesterol, 25-hydroxycholesterol and 27-hydroxycholesterol, regulating interaction with SCAP and retention of the SCAP-SREBP complex in the endoplasmic reticulum. In presence of oxysterol, interacts with SCAP, retaining the SCAP-SREBP complex in the endoplasmic reticulum, thereby preventing SCAP from escorting SREBF1/SREBP1 and SREBF2/SREBP2 to the Golgi. Sterol deprivation or phosphorylation by PCK1 reduce oxysterol-binding, disrupting the interaction between INSIG2 and SCAP, thereby promoting Golgi transport of the SCAP-SREBP complex, followed by processing and nuclear translocation of SREBF1/SREBP1 and SREBF2/SREBP2. Also regulates cholesterol synthesis by regulating degradation of HMGCR: initiates the sterol-mediated ubiquitin-mediated endoplasmic reticulum-associated degradation (ERAD) of HMGCR via recruitment of the reductase to the ubiquitin ligase RNF139. The polypeptide is Insulin-induced gene 2 protein (Mus musculus (Mouse)).